The chain runs to 214 residues: Orotate phosphoribosyltransferase (214 aa).

5-phospho-alpha-D-ribose 1-diphosphate is bound at residue lysine 26. 34–35 (FF) contributes to the orotate binding site. Residues 72 to 73 (YK), arginine 99, lysine 100, lysine 103, histidine 105, and 124 to 132 (DDVITAGTA) each bind 5-phospho-alpha-D-ribose 1-diphosphate. Threonine 128 and arginine 156 together coordinate orotate.

It belongs to the purine/pyrimidine phosphoribosyltransferase family. PyrE subfamily. As to quaternary structure, homodimer. The cofactor is Mg(2+).

It carries out the reaction orotidine 5'-phosphate + diphosphate = orotate + 5-phospho-alpha-D-ribose 1-diphosphate. It functions in the pathway pyrimidine metabolism; UMP biosynthesis via de novo pathway; UMP from orotate: step 1/2. Its function is as follows. Catalyzes the transfer of a ribosyl phosphate group from 5-phosphoribose 1-diphosphate to orotate, leading to the formation of orotidine monophosphate (OMP). The polypeptide is Orotate phosphoribosyltransferase (Proteus mirabilis (strain HI4320)).